We begin with the raw amino-acid sequence, 214 residues long: 3,4-dihydroxy-2-butanone 4-phosphate synthase (214 aa).

Residues 37-38, D42, 150-154, and E174 contribute to the D-ribulose 5-phosphate site; these read RE and RRGHT. Mg(2+) is bound at residue E38. H153 lines the Mg(2+) pocket.

The protein belongs to the DHBP synthase family. As to quaternary structure, homodimer. Mg(2+) serves as cofactor. The cofactor is Mn(2+).

It catalyses the reaction D-ribulose 5-phosphate = (2S)-2-hydroxy-3-oxobutyl phosphate + formate + H(+). The protein operates within cofactor biosynthesis; riboflavin biosynthesis; 2-hydroxy-3-oxobutyl phosphate from D-ribulose 5-phosphate: step 1/1. Its function is as follows. Catalyzes the conversion of D-ribulose 5-phosphate to formate and 3,4-dihydroxy-2-butanone 4-phosphate. The polypeptide is 3,4-dihydroxy-2-butanone 4-phosphate synthase (Nitratidesulfovibrio vulgaris (strain DP4) (Desulfovibrio vulgaris)).